We begin with the raw amino-acid sequence, 355 residues long: Phosphoribosylformylglycinamidine cyclo-ligase (355 aa).

It belongs to the AIR synthase family.

It localises to the cytoplasm. It catalyses the reaction 2-formamido-N(1)-(5-O-phospho-beta-D-ribosyl)acetamidine + ATP = 5-amino-1-(5-phospho-beta-D-ribosyl)imidazole + ADP + phosphate + H(+). The protein operates within purine metabolism; IMP biosynthesis via de novo pathway; 5-amino-1-(5-phospho-D-ribosyl)imidazole from N(2)-formyl-N(1)-(5-phospho-D-ribosyl)glycinamide: step 2/2. This Paraburkholderia phytofirmans (strain DSM 17436 / LMG 22146 / PsJN) (Burkholderia phytofirmans) protein is Phosphoribosylformylglycinamidine cyclo-ligase.